The sequence spans 599 residues: UV-damage endonuclease (599 aa).

Disordered stretches follow at residues 89–224 and 561–599; these read TELA…EKES and IMGP…EDEK. Residues 97–115 show a composition bias toward basic residues; that stretch reads PHKKSTSTSTRKRARSSKK. Residues 116–127 are compositionally biased toward basic and acidic residues; the sequence is KATDSVSDKIDE. The span at 137–146 shows a compositional bias: basic residues; sequence HLRRSSRSKK.

The protein belongs to the uve1/UvsE family.

Endonuclease for the repair of UV-irradiated DNA. Involved in the excision of cyclobutane pyrimidine dimers (CPD) and 6-4 pyrimidine pyrimidones (6-4PP) which forms the UV damage repair (UVDR) pathway. Also functions in oxidative damage repair in vivo. Provides back-up AP endonuclease activity to apn2 together with apn1. This chain is UV-damage endonuclease (uve1), found in Schizosaccharomyces pombe (strain 972 / ATCC 24843) (Fission yeast).